The primary structure comprises 492 residues: Probable serine/threonine-protein kinase WNK9 (492 aa).

Positions 25 to 282 constitute a Protein kinase domain; sequence GRYNEVLGKG…ACELLDDHFL (258 aa). ATP-binding positions include 105–108 and Lys155; that span reads TEMF. The active-site Proton acceptor is the Asp172.

Belongs to the protein kinase superfamily. Ser/Thr protein kinase family. WNK subfamily.

It carries out the reaction L-seryl-[protein] + ATP = O-phospho-L-seryl-[protein] + ADP + H(+). The catalysed reaction is L-threonyl-[protein] + ATP = O-phospho-L-threonyl-[protein] + ADP + H(+). May regulate flowering time by modulating the photoperiod pathway. This Arabidopsis thaliana (Mouse-ear cress) protein is Probable serine/threonine-protein kinase WNK9 (WNK9).